The chain runs to 466 residues: Soluble pyridine nucleotide transhydrogenase (466 aa).

36 to 45 (ERYQNVGGGC) contributes to the FAD binding site.

It belongs to the class-I pyridine nucleotide-disulfide oxidoreductase family. As to quaternary structure, homooligomer; probable homooctamer. Requires FAD as cofactor.

It localises to the cytoplasm. The catalysed reaction is NAD(+) + NADPH = NADH + NADP(+). In terms of biological role, conversion of NADPH, generated by peripheral catabolic pathways, to NADH, which can enter the respiratory chain for energy generation. This Escherichia coli O6:H1 (strain CFT073 / ATCC 700928 / UPEC) protein is Soluble pyridine nucleotide transhydrogenase.